The following is a 239-amino-acid chain: Large ribosomal subunit protein uL2 (239 aa).

Disordered stretches follow at residues 1 to 20 (MGKS…FRSP) and 203 to 239 (PFGG…GRRK). The segment covering 222 to 239 (PPGRKVGHIAARRTGRRK) has biased composition (basic residues).

It belongs to the universal ribosomal protein uL2 family. In terms of assembly, part of the 50S ribosomal subunit. Forms a bridge to the 30S subunit in the 70S ribosome.

One of the primary rRNA binding proteins. Required for association of the 30S and 50S subunits to form the 70S ribosome, for tRNA binding and peptide bond formation. It has been suggested to have peptidyltransferase activity; this is somewhat controversial. Makes several contacts with the 16S rRNA in the 70S ribosome. This Pyrococcus horikoshii (strain ATCC 700860 / DSM 12428 / JCM 9974 / NBRC 100139 / OT-3) protein is Large ribosomal subunit protein uL2.